The following is a 325-amino-acid chain: MTATVKDELSRLRVAKPCCRRAEMAALLRFGGGLHIVGGRIVVEAELDTGATARRLRREVAEVFGFPSTVAVLAAGGLRRSVRYIVRVERDGEQLARSTGLLDQRGRPVRGLPPQVVTGSACDAAAAWRGAFLAHGSLTEPGRSCSLEVTSPGPEAALALVGAARRLGVQAKSRDVRGVDRVVIRDGDAIGALLTRIGAHDSLLAWEERRMRREVRATANRLANFDDANLRRSARAAVAAGARVQAAMRILGDDAPEHLLAAGRLRIEHAQASLEELGALADPPLTKDAVAGRIRRLLALADKRANALGIPNTEASVSPDLLENA.

The H-T-H motif DNA-binding region spans 273 to 306 (SLEELGALADPPLTKDAVAGRIRRLLALADKRAN).

The protein belongs to the WhiA family.

In terms of biological role, involved in cell division and chromosome segregation. This chain is Probable cell division protein WhiA, found in Frankia casuarinae (strain DSM 45818 / CECT 9043 / HFP020203 / CcI3).